We begin with the raw amino-acid sequence, 274 residues long: Tryptophan synthase alpha chain (274 aa).

Residues glutamate 49 and aspartate 60 each act as proton acceptor in the active site.

It belongs to the TrpA family. As to quaternary structure, tetramer of two alpha and two beta chains.

The enzyme catalyses (1S,2R)-1-C-(indol-3-yl)glycerol 3-phosphate + L-serine = D-glyceraldehyde 3-phosphate + L-tryptophan + H2O. Its pathway is amino-acid biosynthesis; L-tryptophan biosynthesis; L-tryptophan from chorismate: step 5/5. The alpha subunit is responsible for the aldol cleavage of indoleglycerol phosphate to indole and glyceraldehyde 3-phosphate. This is Tryptophan synthase alpha chain from Gluconacetobacter diazotrophicus (strain ATCC 49037 / DSM 5601 / CCUG 37298 / CIP 103539 / LMG 7603 / PAl5).